Here is a 597-residue protein sequence, read N- to C-terminus: Elongation factor 4 (597 aa).

The region spanning 2–184 (KHIRNFSIIA…TIVKCIPAPE (183 aa)) is the tr-type G domain. GTP contacts are provided by residues 14–19 (DHGKST) and 131–134 (NKID).

The protein belongs to the TRAFAC class translation factor GTPase superfamily. Classic translation factor GTPase family. LepA subfamily.

It localises to the cell inner membrane. It catalyses the reaction GTP + H2O = GDP + phosphate + H(+). Required for accurate and efficient protein synthesis under certain stress conditions. May act as a fidelity factor of the translation reaction, by catalyzing a one-codon backward translocation of tRNAs on improperly translocated ribosomes. Back-translocation proceeds from a post-translocation (POST) complex to a pre-translocation (PRE) complex, thus giving elongation factor G a second chance to translocate the tRNAs correctly. Binds to ribosomes in a GTP-dependent manner. The chain is Elongation factor 4 from Aliivibrio salmonicida (strain LFI1238) (Vibrio salmonicida (strain LFI1238)).